Here is a 60-residue protein sequence, read N- to C-terminus: Temporin-CG2 (60 aa).

Positions 1–22 are cleaved as a signal peptide; sequence MFTLKKPLLVLFFLATINLSLC. Residues 23-43 constitute a propeptide, removed in mature form; the sequence is EQERNAEEERRDDDERNVEVE.

Expressed by the skin glands.

It is found in the secreted. Its function is as follows. Antimicrobial peptide active against a variety of Gram-positive bacterial strains but not against Gram-negative bacteria. Has weak antifungal activity against a slime mold isolate. Has weak hemolytic activity against human erythrocytes. This chain is Temporin-CG2, found in Amolops chunganensis (Chungan torrent frog).